Consider the following 313-residue polypeptide: tRNA uridine(34) hydroxylase (313 aa).

Residues 124–218 (SDPEVLLIDT…YLEEVPQEET (95 aa)) enclose the Rhodanese domain. The active-site Cysteine persulfide intermediate is the Cys-178.

The protein belongs to the TrhO family.

The enzyme catalyses uridine(34) in tRNA + AH2 + O2 = 5-hydroxyuridine(34) in tRNA + A + H2O. In terms of biological role, catalyzes oxygen-dependent 5-hydroxyuridine (ho5U) modification at position 34 in tRNAs. The sequence is that of tRNA uridine(34) hydroxylase from Pseudomonas fluorescens (strain SBW25).